The chain runs to 555 residues: Probable beta-glucosidase btgE (555 aa).

Positions 1–18 are cleaved as a signal peptide; sequence MRGAILATAAAFAGTAVA. Disordered regions lie at residues 92–114 and 263–290; these read TSSAAPVETPSETPSPTPEVTLP and TTSAASTTTAVPSSSTTTSSATSVPTGA. The span at 263–288 shows a compositional bias: low complexity; that stretch reads TTSAASTTTAVPSSSTTTSSATSVPT. The active-site Proton donor is glutamate 392. Glutamate 488 (nucleophile) is an active-site residue.

Belongs to the glycosyl hydrolase 17 family.

The protein resides in the secreted. The protein localises to the cell wall. It carries out the reaction Hydrolysis of terminal, non-reducing beta-D-glucosyl residues with release of beta-D-glucose.. It functions in the pathway glycan metabolism; cellulose degradation. Its function is as follows. Beta-glucosidases are one of a number of cellulolytic enzymes involved in the degradation of cellulosic biomass. Catalyzes the last step releasing glucose from the inhibitory cellobiose. The chain is Probable beta-glucosidase btgE (btgE) from Emericella nidulans (strain FGSC A4 / ATCC 38163 / CBS 112.46 / NRRL 194 / M139) (Aspergillus nidulans).